Here is a 208-residue protein sequence, read N- to C-terminus: Glutathione S-transferase GstB (208 aa).

Residues 1 to 83 (MITLWGRNNS…YLAAQYGQKR (83 aa)) form the GST N-terminal domain. Residues N12, N39, V53, and 67 to 68 (ES) each bind glutathione. The GST C-terminal domain maps to 88–208 (SPARRAEAEK…VRKVVMIPVS (121 aa)).

It belongs to the GST superfamily.

It carries out the reaction RX + glutathione = an S-substituted glutathione + a halide anion + H(+). Functionally, conjugation of reduced glutathione to a wide number of exogenous and endogenous hydrophobic electrophiles. The protein is Glutathione S-transferase GstB (gstB) of Escherichia coli O6:H1 (strain CFT073 / ATCC 700928 / UPEC).